Consider the following 665-residue polypeptide: Protein-arginine deiminase type-2 (665 aa).

Ca(2+)-binding residues include aspartate 123, aspartate 125, aspartate 127, valine 129, glutamate 131, asparagine 154, aspartate 156, glutamate 158, aspartate 166, aspartate 169, lysine 171, aspartate 177, aspartate 180, glutamate 354, aspartate 389, phenylalanine 408, leucine 411, and glutamate 412. Cysteine 647 serves as the catalytic Nucleophile.

It belongs to the protein arginine deiminase family. Homodimer. Ca(2+) serves as cofactor. As to expression, detected in keratinocytes in epidermis (at protein level).

The protein resides in the cytoplasm. The enzyme catalyses L-arginyl-[protein] + H2O = L-citrullyl-[protein] + NH4(+). Functionally, catalyzes the deimination of arginine residues of proteins. This Homo sapiens (Human) protein is Protein-arginine deiminase type-2 (PADI2).